A 420-amino-acid polypeptide reads, in one-letter code: Uteroferrin-associated basic protein 2 (420 aa).

The signal sequence occupies residues methionine 1–cysteine 25. N-linked (GlcNAc...) asparagine glycosylation is found at asparagine 225, asparagine 271, and asparagine 343.

The protein belongs to the serpin family. UTMP subfamily.

Its subcellular location is the secreted. It localises to the extracellular space. The polypeptide is Uteroferrin-associated basic protein 2 (Sus scrofa (Pig)).